We begin with the raw amino-acid sequence, 112 residues long: Ribonuclease P protein component (112 aa).

Belongs to the RnpA family. As to quaternary structure, consists of a catalytic RNA component (M1 or rnpB) and a protein subunit.

The enzyme catalyses Endonucleolytic cleavage of RNA, removing 5'-extranucleotides from tRNA precursor.. In terms of biological role, RNaseP catalyzes the removal of the 5'-leader sequence from pre-tRNA to produce the mature 5'-terminus. It can also cleave other RNA substrates such as 4.5S RNA. The protein component plays an auxiliary but essential role in vivo by binding to the 5'-leader sequence and broadening the substrate specificity of the ribozyme. This chain is Ribonuclease P protein component, found in Mycoplasma mobile (strain ATCC 43663 / 163K / NCTC 11711) (Mesomycoplasma mobile).